The following is a 233-amino-acid chain: Orotidine 5'-phosphate decarboxylase (233 aa).

Substrate-binding positions include D9, K31, 58-67 (DLKLHDIPNT), T120, R182, Q191, G211, and R212. K60 functions as the Proton donor in the catalytic mechanism.

The protein belongs to the OMP decarboxylase family. Type 1 subfamily. In terms of assembly, homodimer.

The catalysed reaction is orotidine 5'-phosphate + H(+) = UMP + CO2. The protein operates within pyrimidine metabolism; UMP biosynthesis via de novo pathway; UMP from orotate: step 2/2. In terms of biological role, catalyzes the decarboxylation of orotidine 5'-monophosphate (OMP) to uridine 5'-monophosphate (UMP). The chain is Orotidine 5'-phosphate decarboxylase from Listeria monocytogenes serotype 4a (strain HCC23).